The primary structure comprises 454 residues: Chromosomal replication initiator protein DnaA (454 aa).

Positions M1–Y79 are domain I, interacts with DnaA modulators. The segment at Y79–S117 is domain II. The tract at residues N118–S334 is domain III, AAA+ region. G162, G164, K165, and T166 together coordinate ATP. A domain IV, binds dsDNA region spans residues R335–K454.

The protein belongs to the DnaA family. Oligomerizes as a right-handed, spiral filament on DNA at oriC.

The protein resides in the cytoplasm. Its function is as follows. Plays an essential role in the initiation and regulation of chromosomal replication. ATP-DnaA binds to the origin of replication (oriC) to initiate formation of the DNA replication initiation complex once per cell cycle. Binds the DnaA box (a 9 base pair repeat at the origin) and separates the double-stranded (ds)DNA. Forms a right-handed helical filament on oriC DNA; dsDNA binds to the exterior of the filament while single-stranded (ss)DNA is stabiized in the filament's interior. The ATP-DnaA-oriC complex binds and stabilizes one strand of the AT-rich DNA unwinding element (DUE), permitting loading of DNA polymerase. After initiation quickly degrades to an ADP-DnaA complex that is not apt for DNA replication. Binds acidic phospholipids. The protein is Chromosomal replication initiator protein DnaA of Buchnera aphidicola subsp. Acyrthosiphon pisum (strain 5A).